The chain runs to 150 residues: Deoxyuridine 5'-triphosphate nucleotidohydrolase (150 aa).

Residues 69–71, N82, 86–88, and M96 each bind substrate; these read RSG and LID.

It belongs to the dUTPase family. The cofactor is Mg(2+).

It carries out the reaction dUTP + H2O = dUMP + diphosphate + H(+). Its pathway is pyrimidine metabolism; dUMP biosynthesis; dUMP from dCTP (dUTP route): step 2/2. In terms of biological role, this enzyme is involved in nucleotide metabolism: it produces dUMP, the immediate precursor of thymidine nucleotides and it decreases the intracellular concentration of dUTP so that uracil cannot be incorporated into DNA. The protein is Deoxyuridine 5'-triphosphate nucleotidohydrolase of Acinetobacter baylyi (strain ATCC 33305 / BD413 / ADP1).